The chain runs to 219 residues: MSQPILGYWDIRGYAQPIRLLLTYSGVDFVDKRYQIGPAPDFDRSEWLNEKFNLGLDFPNLPYYIDGDMKMTQTFAILRYLGRKYKLNGSNDHEEIRISMAEQQTEDMMAAMIRVCYDANCDKLKPDYLKSLPDCLKLMSKFVGEHAFIAGANISYVDFNLYEYLCHVKVMVPEVFGQFENLKRYVERMESLPRVSDYIKKQQPKTFNAPTSKWNASYA.

Residues 2 to 89 (SQPILGYWDI…YLGRKYKLNG (88 aa)) enclose the GST N-terminal domain. Glutathione is bound by residues 8–9 (YW), 44–47 (RSEW), lysine 51, 60–61 (NL), and 73–74 (QT). The GST C-terminal domain maps to 91–207 (NDHEEIRISM…YIKKQQPKTF (117 aa)). Residue tyrosine 117 participates in substrate binding.

Belongs to the GST superfamily. Mu family. Homodimer.

It localises to the cytoplasm. It carries out the reaction RX + glutathione = an S-substituted glutathione + a halide anion + H(+). This chain is Glutathione S-transferase, found in Dermatophagoides pteronyssinus (European house dust mite).